The primary structure comprises 451 residues: Phosphoglucosamine mutase (451 aa).

Catalysis depends on serine 102, which acts as the Phosphoserine intermediate. 4 residues coordinate Mg(2+): serine 102, aspartate 243, aspartate 245, and aspartate 247. At serine 102 the chain carries Phosphoserine.

This sequence belongs to the phosphohexose mutase family. Mg(2+) is required as a cofactor. Post-translationally, activated by phosphorylation.

It carries out the reaction alpha-D-glucosamine 1-phosphate = D-glucosamine 6-phosphate. Functionally, catalyzes the conversion of glucosamine-6-phosphate to glucosamine-1-phosphate. This chain is Phosphoglucosamine mutase, found in Sinorhizobium medicae (strain WSM419) (Ensifer medicae).